A 196-amino-acid polypeptide reads, in one-letter code: Adenylyl-sulfate kinase (196 aa).

Residue 31-38 (GLSGAGKS) coordinates ATP. The active-site Phosphoserine intermediate is the serine 105.

It belongs to the APS kinase family.

The enzyme catalyses adenosine 5'-phosphosulfate + ATP = 3'-phosphoadenylyl sulfate + ADP + H(+). The protein operates within sulfur metabolism; hydrogen sulfide biosynthesis; sulfite from sulfate: step 2/3. In terms of biological role, catalyzes the synthesis of activated sulfate. The chain is Adenylyl-sulfate kinase (cysC) from Pseudomonas aeruginosa (strain ATCC 15692 / DSM 22644 / CIP 104116 / JCM 14847 / LMG 12228 / 1C / PRS 101 / PAO1).